The following is a 242-amino-acid chain: Ribonuclease HII (242 aa).

The region spanning 21 to 234 is the RNase H type-2 domain; the sequence is KIIVGLDEAG…SKNLLKEIEE (214 aa). 3 residues coordinate a divalent metal cation: aspartate 27, glutamate 28, and aspartate 128.

Belongs to the RNase HII family. Mn(2+) serves as cofactor. The cofactor is Mg(2+).

It is found in the cytoplasm. It catalyses the reaction Endonucleolytic cleavage to 5'-phosphomonoester.. Its function is as follows. Endonuclease that specifically degrades the RNA of RNA-DNA hybrids. This chain is Ribonuclease HII, found in Methanococcus maripaludis (strain DSM 14266 / JCM 13030 / NBRC 101832 / S2 / LL).